The chain runs to 72 residues: Large ribosomal subunit protein bL31 (72 aa).

Residues Cys16, Cys18, Cys38, and Cys41 each coordinate Zn(2+).

Belongs to the bacterial ribosomal protein bL31 family. Type A subfamily. In terms of assembly, part of the 50S ribosomal subunit. The cofactor is Zn(2+).

In terms of biological role, binds the 23S rRNA. This chain is Large ribosomal subunit protein bL31, found in Aliivibrio salmonicida (strain LFI1238) (Vibrio salmonicida (strain LFI1238)).